The sequence spans 200 residues: Putative NAD(P)H nitroreductase Spy0809 (200 aa).

The cofactor is FMN.

This chain is Putative NAD(P)H nitroreductase Spy0809, found in Streptococcus pyogenes serotype M6 (strain ATCC BAA-946 / MGAS10394).